A 558-amino-acid chain; its full sequence is SPATS2-like protein (558 aa).

At A2 the chain carries N-acetylalanine. Positions G63–Q79 are enriched in basic residues. The tract at residues G63–A204 is disordered. 2 stretches are compositionally biased toward basic and acidic residues: residues G80–E92 and G110–R142. Residue S120 is modified to Phosphoserine. A coiled-coil region spans residues K279 to L344. 2 disordered regions span residues G385 to K406 and T421 to A514. Residues T421 to S433 are compositionally biased toward polar residues. Basic residues predominate over residues H469–G485.

The protein belongs to the SPATS2 family.

It localises to the cytoplasm. The protein resides in the nucleus. It is found in the nucleolus. The chain is SPATS2-like protein (Spats2l) from Mus musculus (Mouse).